The sequence spans 804 residues: Leucine--tRNA ligase (804 aa).

The 'HIGH' region signature appears at 40-51 (PYPSGAGLHVGH). The short motif at 576–580 (KMSKS) is the 'KMSKS' region element. Residue lysine 579 participates in ATP binding.

It belongs to the class-I aminoacyl-tRNA synthetase family.

It localises to the cytoplasm. It carries out the reaction tRNA(Leu) + L-leucine + ATP = L-leucyl-tRNA(Leu) + AMP + diphosphate. This Staphylococcus aureus (strain MRSA252) protein is Leucine--tRNA ligase.